The chain runs to 122 residues: Large ribosomal subunit protein uL14 (122 aa).

It belongs to the universal ribosomal protein uL14 family. As to quaternary structure, part of the 50S ribosomal subunit. Forms a cluster with proteins L3 and L19. In the 70S ribosome, L14 and L19 interact and together make contacts with the 16S rRNA in bridges B5 and B8.

Its function is as follows. Binds to 23S rRNA. Forms part of two intersubunit bridges in the 70S ribosome. The protein is Large ribosomal subunit protein uL14 of Clostridium tetani (strain Massachusetts / E88).